Consider the following 173-residue polypeptide: Peptidoglycan-associated lipoprotein (173 aa).

Residues 1–21 (MQLNKVLKGLMIALPVMAIAA) form the signal peptide. Residue Cys-22 is the site of N-palmitoyl cysteine attachment. Cys-22 carries S-diacylglycerol cysteine lipidation. The tract at residues 30–58 (NDGSEGMLGAGTGMDANGGNGNMSSEEQA) is disordered. Gly residues predominate over residues 35 to 50 (GMLGAGTGMDANGGNG). An OmpA-like domain is found at 60–173 (LQMQQLQQNN…SKNRRAVLVY (114 aa)).

It belongs to the Pal lipoprotein family. In terms of assembly, the Tol-Pal system is composed of five core proteins: the inner membrane proteins TolA, TolQ and TolR, the periplasmic protein TolB and the outer membrane protein Pal. They form a network linking the inner and outer membranes and the peptidoglycan layer.

The protein localises to the cell outer membrane. Its function is as follows. Part of the Tol-Pal system, which plays a role in outer membrane invagination during cell division and is important for maintaining outer membrane integrity. In Escherichia coli O157:H7, this protein is Peptidoglycan-associated lipoprotein.